Reading from the N-terminus, the 196-residue chain is Probable malonic semialdehyde reductase RutE (196 aa).

This sequence belongs to the nitroreductase family. HadB/RutE subfamily. FMN is required as a cofactor.

It carries out the reaction 3-hydroxypropanoate + NADP(+) = 3-oxopropanoate + NADPH + H(+). In terms of biological role, may reduce toxic product malonic semialdehyde to 3-hydroxypropionic acid, which is excreted. This Shigella flexneri serotype 5b (strain 8401) protein is Probable malonic semialdehyde reductase RutE.